The chain runs to 232 residues: Ubiquinone biosynthesis O-methyltransferase (232 aa).

4 residues coordinate S-adenosyl-L-methionine: R36, G55, D76, and M120.

Belongs to the methyltransferase superfamily. UbiG/COQ3 family.

It catalyses the reaction a 3-demethylubiquinol + S-adenosyl-L-methionine = a ubiquinol + S-adenosyl-L-homocysteine + H(+). The enzyme catalyses a 3-(all-trans-polyprenyl)benzene-1,2-diol + S-adenosyl-L-methionine = a 2-methoxy-6-(all-trans-polyprenyl)phenol + S-adenosyl-L-homocysteine + H(+). The protein operates within cofactor biosynthesis; ubiquinone biosynthesis. Its function is as follows. O-methyltransferase that catalyzes the 2 O-methylation steps in the ubiquinone biosynthetic pathway. This Paraburkholderia phymatum (strain DSM 17167 / CIP 108236 / LMG 21445 / STM815) (Burkholderia phymatum) protein is Ubiquinone biosynthesis O-methyltransferase.